The following is a 170-amino-acid chain: Acireductone dioxygenase (170 aa).

Fe(2+) is bound by residues His-99, His-101, Glu-105, and His-144. Residues His-99, His-101, Glu-105, and His-144 each contribute to the Ni(2+) site.

The protein belongs to the acireductone dioxygenase (ARD) family. In terms of assembly, monomer. Fe(2+) serves as cofactor. Requires Ni(2+) as cofactor.

It catalyses the reaction 1,2-dihydroxy-5-(methylsulfanyl)pent-1-en-3-one + O2 = 3-(methylsulfanyl)propanoate + CO + formate + 2 H(+). It carries out the reaction 1,2-dihydroxy-5-(methylsulfanyl)pent-1-en-3-one + O2 = 4-methylsulfanyl-2-oxobutanoate + formate + 2 H(+). It functions in the pathway amino-acid biosynthesis; L-methionine biosynthesis via salvage pathway; L-methionine from S-methyl-5-thio-alpha-D-ribose 1-phosphate: step 5/6. Catalyzes 2 different reactions between oxygen and the acireductone 1,2-dihydroxy-3-keto-5-methylthiopentene (DHK-MTPene) depending upon the metal bound in the active site. Fe-containing acireductone dioxygenase (Fe-ARD) produces formate and 2-keto-4-methylthiobutyrate (KMTB), the alpha-ketoacid precursor of methionine in the methionine recycle pathway. Ni-containing acireductone dioxygenase (Ni-ARD) produces methylthiopropionate, carbon monoxide and formate, and does not lie on the methionine recycle pathway. This is Acireductone dioxygenase from Bacillus cereus (strain ATCC 10987 / NRS 248).